We begin with the raw amino-acid sequence, 201 residues long: 3-isopropylmalate dehydratase small subunit (201 aa).

This sequence belongs to the LeuD family. LeuD type 1 subfamily. Heterodimer of LeuC and LeuD.

It catalyses the reaction (2R,3S)-3-isopropylmalate = (2S)-2-isopropylmalate. It participates in amino-acid biosynthesis; L-leucine biosynthesis; L-leucine from 3-methyl-2-oxobutanoate: step 2/4. Catalyzes the isomerization between 2-isopropylmalate and 3-isopropylmalate, via the formation of 2-isopropylmaleate. In Cereibacter sphaeroides (strain KD131 / KCTC 12085) (Rhodobacter sphaeroides), this protein is 3-isopropylmalate dehydratase small subunit.